Reading from the N-terminus, the 245-residue chain is NAD(P)H-quinone oxidoreductase subunit K (245 aa).

Positions 58, 59, 123, and 154 each coordinate [4Fe-4S] cluster.

This sequence belongs to the complex I 20 kDa subunit family. In terms of assembly, NDH-1 can be composed of about 15 different subunits; different subcomplexes with different compositions have been identified which probably have different functions. The cofactor is [4Fe-4S] cluster.

The protein resides in the cellular thylakoid membrane. It catalyses the reaction a plastoquinone + NADH + (n+1) H(+)(in) = a plastoquinol + NAD(+) + n H(+)(out). The enzyme catalyses a plastoquinone + NADPH + (n+1) H(+)(in) = a plastoquinol + NADP(+) + n H(+)(out). NDH-1 shuttles electrons from an unknown electron donor, via FMN and iron-sulfur (Fe-S) centers, to quinones in the respiratory and/or the photosynthetic chain. The immediate electron acceptor for the enzyme in this species is believed to be plastoquinone. Couples the redox reaction to proton translocation, and thus conserves the redox energy in a proton gradient. Cyanobacterial NDH-1 also plays a role in inorganic carbon-concentration. The polypeptide is NAD(P)H-quinone oxidoreductase subunit K (Trichormus variabilis (strain ATCC 29413 / PCC 7937) (Anabaena variabilis)).